Consider the following 285-residue polypeptide: Bifunctional protein FolD (285 aa).

NADP(+) contacts are provided by residues Gly165–Ser167 and Ile232.

The protein belongs to the tetrahydrofolate dehydrogenase/cyclohydrolase family. As to quaternary structure, homodimer.

It carries out the reaction (6R)-5,10-methylene-5,6,7,8-tetrahydrofolate + NADP(+) = (6R)-5,10-methenyltetrahydrofolate + NADPH. The enzyme catalyses (6R)-5,10-methenyltetrahydrofolate + H2O = (6R)-10-formyltetrahydrofolate + H(+). It functions in the pathway one-carbon metabolism; tetrahydrofolate interconversion. In terms of biological role, catalyzes the oxidation of 5,10-methylenetetrahydrofolate to 5,10-methenyltetrahydrofolate and then the hydrolysis of 5,10-methenyltetrahydrofolate to 10-formyltetrahydrofolate. In Sulfurihydrogenibium sp. (strain YO3AOP1), this protein is Bifunctional protein FolD.